We begin with the raw amino-acid sequence, 208 residues long: Fibroblast growth factor 6 (208 aa).

An N-terminal signal peptide occupies residues 1–37 (MALGQKLFITMSRGAGRLQGTLWALVFLGILVGMVVP). N-linked (GlcNAc...) asparagine glycosylation occurs at asparagine 45. Cysteine 90 and cysteine 157 are disulfide-bonded.

The protein belongs to the heparin-binding growth factors family. As to quaternary structure, interacts with FGFR1, FGFR2 and FGFR4. Affinity between fibroblast growth factors (FGFs) and their receptors is increased by heparan sulfate glycosaminoglycans that function as coreceptors. In terms of tissue distribution, leukemia cell lines with platelet/ megakaryocytic differentiation potential.

The protein resides in the secreted. Its subcellular location is the extracellular space. Its function is as follows. Plays an important role in the regulation of cell proliferation, cell differentiation, angiogenesis and myogenesis, and is required for normal muscle regeneration. In Homo sapiens (Human), this protein is Fibroblast growth factor 6 (FGF6).